Consider the following 193-residue polypeptide: Chaperone protein TorD (193 aa).

Belongs to the TorD/DmsD family. TorD subfamily.

The protein localises to the cytoplasm. Its function is as follows. Involved in the biogenesis of TorA. Acts on TorA before the insertion of the molybdenum cofactor and, as a result, probably favors a conformation of the apoenzyme that is competent for acquiring the cofactor. This Actinobacillus succinogenes (strain ATCC 55618 / DSM 22257 / CCUG 43843 / 130Z) protein is Chaperone protein TorD.